Consider the following 224-residue polypeptide: dTTP/UTP pyrophosphatase (224 aa).

The active-site Proton acceptor is aspartate 77.

The protein belongs to the Maf family. YhdE subfamily. A divalent metal cation serves as cofactor.

Its subcellular location is the cytoplasm. It catalyses the reaction dTTP + H2O = dTMP + diphosphate + H(+). It carries out the reaction UTP + H2O = UMP + diphosphate + H(+). Nucleoside triphosphate pyrophosphatase that hydrolyzes dTTP and UTP. May have a dual role in cell division arrest and in preventing the incorporation of modified nucleotides into cellular nucleic acids. This chain is dTTP/UTP pyrophosphatase, found in Dehalococcoides mccartyi (strain ATCC BAA-2266 / KCTC 15142 / 195) (Dehalococcoides ethenogenes (strain 195)).